A 349-amino-acid chain; its full sequence is Polyamine aminopropyltransferase 2 (349 aa).

Residues 29–267 form the PABS domain; it reads DGAITAIEDS…SSWGFLLASD (239 aa). Gln-60 contributes to the S-methyl-5'-thioadenosine binding site. Spermidine is bound by residues His-91 and Glu-115. Residues Asp-135 and 167–168 contribute to the S-methyl-5'-thioadenosine site; that span reads DG. Asp-185 acts as the Proton acceptor in catalysis. Pro-194 serves as a coordination point for S-methyl-5'-thioadenosine.

Belongs to the spermidine/spermine synthase family. In terms of assembly, homodimer or homotetramer.

The protein localises to the cytoplasm. The enzyme catalyses S-adenosyl 3-(methylsulfanyl)propylamine + putrescine = S-methyl-5'-thioadenosine + spermidine + H(+). Its pathway is amine and polyamine biosynthesis; spermidine biosynthesis; spermidine from putrescine: step 1/1. Catalyzes the irreversible transfer of a propylamine group from the amino donor S-adenosylmethioninamine (decarboxy-AdoMet) to putrescine (1,4-diaminobutane) to yield spermidine. This is Polyamine aminopropyltransferase 2 from Pseudomonas aeruginosa (strain ATCC 15692 / DSM 22644 / CIP 104116 / JCM 14847 / LMG 12228 / 1C / PRS 101 / PAO1).